The sequence spans 623 residues: 1-butanol dehydrogenase (quinone) (623 aa).

The first 28 residues, 1–28 (MKKSHAKPFALRAIVVATAAALSLPAAA), serve as a signal peptide directing secretion. Positions 40, 43, and 46 each coordinate Ca(2+). Glu90 provides a ligand contact to pyrroloquinoline quinone. Cys134 and Cys135 are oxidised to a cystine. Pyrroloquinoline quinone is bound by residues Arg140, Thr184, and 202–204 (HGS). Residue Glu208 participates in Ca(2+) binding. The tract at residues 235–274 (HMGRLNGKDSTPTGDPKAPSWPDDPNSPTGKVEAWSQGGG) is disordered. Ca(2+) is bound by residues Asn295 and Asp345. The active-site Proton acceptor is Asp345. Arg374 is a pyrroloquinoline quinone binding site. The disordered stretch occupies residues 420 to 440 (GKPIEKDNRPPQPKEGADKGE). Ala592 serves as a coordination point for pyrroloquinoline quinone.

It belongs to the bacterial PQQ dehydrogenase family. Pyrroloquinoline quinone serves as cofactor. Requires Ca(2+) as cofactor.

Its subcellular location is the periplasm. It catalyses the reaction butan-1-ol + a quinone = butanal + a quinol. In terms of biological role, involved in the metabolism of butane. May function primarily in energy generation. Catalyzes the oxidation of 1-butanol to 1-butanal. Also able to use 2-butanol and butyraldehyde, although the affinity is comparatively low. The protein is 1-butanol dehydrogenase (quinone) of Thauera butanivorans (strain ATCC 43655 / DSM 2080 / JCM 20651 / CCUG 51053 / NBRC 103042 / IAM 12574 / Bu B1211) (Pseudomonas butanovora).